A 176-amino-acid polypeptide reads, in one-letter code: Putative Ras-related protein RABA4e (176 aa).

It belongs to the small GTPase superfamily. Rab family.

The chain is Putative Ras-related protein RABA4e (RABA4E) from Arabidopsis thaliana (Mouse-ear cress).